The following is a 403-amino-acid chain: Putative F-box/LRR-repeat protein At5g38386 (403 aa).

The region spanning 1–47 (MDHLSNLPDELLCHIMSFLTTKEAALISVLSKRWRNLIAFVPNLDIF) is the F-box domain. LRR repeat units follow at residues 64–91 (IRQL…SLCC), 93–119 (GGSY…DLSM), 131–156 (VFEN…VMNH), 175–203 (LKTL…SYSD), 243–274 (YLYF…SIKS), and 275–300 (VESR…VLEA).

This is Putative F-box/LRR-repeat protein At5g38386 from Arabidopsis thaliana (Mouse-ear cress).